Here is a 492-residue protein sequence, read N- to C-terminus: Vacuolar fusion protein CCZ1 homolog (492 aa).

Residues 255–275 (SVHAGPTSSSSNGTASVERPL) form a disordered region. Residues 260–269 (PTSSSSNGTA) show a composition bias toward polar residues.

The protein belongs to the CCZ1 family. As to quaternary structure, interacts with MON1.

It is found in the endosome. It localises to the prevacuolar compartment. In terms of biological role, plays an important role in membrane trafficking through the secretory apparatus. In complex with MON1, acts as a guanine exchange factor (GEF) for Rab7 protein family. Promotes the exchange of GDP to GTP, converting it from an inactive GDP-bound form into an active GTP-bound form. The active form is involved in protein trafficking from prevacuolar compartments (PVCs) to vacuoles. May serve as a linker between Rab5 and Rab7 protein families in PVCs and mediate PVC maturation. In Oryza sativa subsp. japonica (Rice), this protein is Vacuolar fusion protein CCZ1 homolog.